The sequence spans 405 residues: Phosphopentomutase (405 aa).

Residues aspartate 10, aspartate 303, histidine 308, aspartate 344, histidine 345, and histidine 356 each contribute to the Mn(2+) site.

The protein belongs to the phosphopentomutase family. Mn(2+) serves as cofactor.

The protein localises to the cytoplasm. It carries out the reaction 2-deoxy-alpha-D-ribose 1-phosphate = 2-deoxy-D-ribose 5-phosphate. The catalysed reaction is alpha-D-ribose 1-phosphate = D-ribose 5-phosphate. It functions in the pathway carbohydrate degradation; 2-deoxy-D-ribose 1-phosphate degradation; D-glyceraldehyde 3-phosphate and acetaldehyde from 2-deoxy-alpha-D-ribose 1-phosphate: step 1/2. In terms of biological role, isomerase that catalyzes the conversion of deoxy-ribose 1-phosphate (dRib-1-P) and ribose 1-phosphate (Rib-1-P) to deoxy-ribose 5-phosphate (dRib-5-P) and ribose 5-phosphate (Rib-5-P), respectively. The polypeptide is Phosphopentomutase (Shewanella woodyi (strain ATCC 51908 / MS32)).